We begin with the raw amino-acid sequence, 478 residues long: MSVELWQQCVELLRDELPAQQFNTWIRPLQVEADGDELRVYAPNRFVLDWVNEKYLGRLLELLGERSEDVTPSVSLLIGSKRSSAPRAVQPASPPPAVVQAAPVAIEEASAARTVDAQPVAPATVRTERSVQVEGGLKHTSYLNRAFTFENFVEGKSNQLARAAAWQVADNPKHGYNPLFLYGGVGLGKTHLMHAVGNHLLKKNPNAKVVYLHSERFVADMVKALQLNAINEFKRFYRSVDALLIDDIQFFAKKERSQEEFFHTFNALLEGGQQVILTSDRYPKEIEGLEERLKSRFGWGLTVAVEPPELETRVAILMKKAEQTKVELPHDAAFFIAQRIRSNVRELEGALKRVIAHSHFTNHPITIELIRESLKDLLALQDKLVSIDNIQRTVAEYYKIKIADLLSKRRSRSVARPRQVAMALSKELTNHSLPEIGDSFGGRDHTTVLHACRKIAELRETDADIREDYKNLLRTLTT.

A domain I, interacts with DnaA modulators region spans residues 1–90 (MSVELWQQCV…KRSSAPRAVQ (90 aa)). Residues 91–141 (PASPPPAVVQAAPVAIEEASAARTVDAQPVAPATVRTERSVQVEGGLKHTS) form a domain II region. Residues 142 to 358 (YLNRAFTFEN…GALKRVIAHS (217 aa)) form a domain III, AAA+ region region. Residues Gly186, Gly188, Lys189, and Thr190 each coordinate ATP. The interval 359 to 478 (HFTNHPITIE…YKNLLRTLTT (120 aa)) is domain IV, binds dsDNA.

This sequence belongs to the DnaA family. In terms of assembly, oligomerizes as a right-handed, spiral filament on DNA at oriC.

It is found in the cytoplasm. Its function is as follows. Plays an essential role in the initiation and regulation of chromosomal replication. ATP-DnaA binds to the origin of replication (oriC) to initiate formation of the DNA replication initiation complex once per cell cycle. Binds the DnaA box (a 9 base pair repeat at the origin) and separates the double-stranded (ds)DNA. Forms a right-handed helical filament on oriC DNA; dsDNA binds to the exterior of the filament while single-stranded (ss)DNA is stabiized in the filament's interior. The ATP-DnaA-oriC complex binds and stabilizes one strand of the AT-rich DNA unwinding element (DUE), permitting loading of DNA polymerase. After initiation quickly degrades to an ADP-DnaA complex that is not apt for DNA replication. Binds acidic phospholipids. This is Chromosomal replication initiator protein DnaA from Azotobacter vinelandii (strain DJ / ATCC BAA-1303).